The primary structure comprises 369 residues: Glutamate 5-kinase (369 aa).

Lysine 9 lines the ATP pocket. Substrate is bound by residues serine 49, aspartate 136, and asparagine 148. Residues threonine 168 to aspartate 169 and threonine 210 to lysine 216 each bind ATP. The PUA domain maps to glutamine 275–tryptophan 355.

Belongs to the glutamate 5-kinase family.

The protein localises to the cytoplasm. It carries out the reaction L-glutamate + ATP = L-glutamyl 5-phosphate + ADP. The protein operates within amino-acid biosynthesis; L-proline biosynthesis; L-glutamate 5-semialdehyde from L-glutamate: step 1/2. Functionally, catalyzes the transfer of a phosphate group to glutamate to form L-glutamate 5-phosphate. The polypeptide is Glutamate 5-kinase (Streptococcus sanguinis (strain SK36)).